The sequence spans 240 residues: UDP-2,3-diacylglucosamine hydrolase (240 aa).

Mn(2+) contacts are provided by Asp8, His10, Asp41, Asn78, and His113. 78–79 (NR) contacts substrate. Substrate-binding residues include Asp121, Ser159, Asn163, Lys166, and His194. Mn(2+)-binding residues include His194 and His196.

It belongs to the LpxH family. It depends on Mn(2+) as a cofactor.

It is found in the cell inner membrane. It carries out the reaction UDP-2-N,3-O-bis[(3R)-3-hydroxytetradecanoyl]-alpha-D-glucosamine + H2O = 2-N,3-O-bis[(3R)-3-hydroxytetradecanoyl]-alpha-D-glucosaminyl 1-phosphate + UMP + 2 H(+). It functions in the pathway glycolipid biosynthesis; lipid IV(A) biosynthesis; lipid IV(A) from (3R)-3-hydroxytetradecanoyl-[acyl-carrier-protein] and UDP-N-acetyl-alpha-D-glucosamine: step 4/6. In terms of biological role, hydrolyzes the pyrophosphate bond of UDP-2,3-diacylglucosamine to yield 2,3-diacylglucosamine 1-phosphate (lipid X) and UMP by catalyzing the attack of water at the alpha-P atom. Involved in the biosynthesis of lipid A, a phosphorylated glycolipid that anchors the lipopolysaccharide to the outer membrane of the cell. The protein is UDP-2,3-diacylglucosamine hydrolase of Shewanella baltica (strain OS155 / ATCC BAA-1091).